Reading from the N-terminus, the 585-residue chain is Type IV pilus assembly ATPase TfpB (585 aa).

G346–T351 contacts ATP. Residues C476, C479, C511, and C514 each coordinate Zn(2+).

The protein belongs to the GSP E family.

Its subcellular location is the cytoplasm. Functionally, ATPase component of the type IV pilus (T4P). Acts as a molecular motor to provide the energy that is required for biogenesis of the pilus and the extrusion of substrates generated in the cytoplasm. TfpB is required for optimal T4P extension and, consequently, efficient natural transformation. May play a role in initiating T4P extension. The polypeptide is Type IV pilus assembly ATPase TfpB (Acinetobacter baylyi (strain ATCC 33305 / BD413 / ADP1)).